A 140-amino-acid polypeptide reads, in one-letter code: Nucleoside diphosphate kinase (140 aa).

Residues lysine 11, phenylalanine 59, arginine 87, threonine 93, arginine 104, and asparagine 114 each contribute to the ATP site. Catalysis depends on histidine 117, which acts as the Pros-phosphohistidine intermediate.

The protein belongs to the NDK family. As to quaternary structure, homotetramer. Mg(2+) is required as a cofactor.

It localises to the cytoplasm. The enzyme catalyses a 2'-deoxyribonucleoside 5'-diphosphate + ATP = a 2'-deoxyribonucleoside 5'-triphosphate + ADP. It carries out the reaction a ribonucleoside 5'-diphosphate + ATP = a ribonucleoside 5'-triphosphate + ADP. In terms of biological role, major role in the synthesis of nucleoside triphosphates other than ATP. The ATP gamma phosphate is transferred to the NDP beta phosphate via a ping-pong mechanism, using a phosphorylated active-site intermediate. The polypeptide is Nucleoside diphosphate kinase (Jannaschia sp. (strain CCS1)).